The chain runs to 248 residues: UPF0246 protein A1I_02510 (248 aa).

Belongs to the UPF0246 family.

The polypeptide is UPF0246 protein A1I_02510 (Rickettsia bellii (strain OSU 85-389)).